We begin with the raw amino-acid sequence, 311 residues long: Ribosomal protein L11 methyltransferase (311 aa).

S-adenosyl-L-methionine contacts are provided by Thr-162, Gly-183, Asp-205, and Asn-248.

This sequence belongs to the methyltransferase superfamily. PrmA family.

The protein resides in the cytoplasm. It catalyses the reaction L-lysyl-[protein] + 3 S-adenosyl-L-methionine = N(6),N(6),N(6)-trimethyl-L-lysyl-[protein] + 3 S-adenosyl-L-homocysteine + 3 H(+). Methylates ribosomal protein L11. The sequence is that of Ribosomal protein L11 methyltransferase from Bacillus subtilis (strain 168).